A 63-amino-acid polypeptide reads, in one-letter code: Large ribosomal subunit protein bL28 (63 aa).

The segment at 1 to 20 is disordered; it reads MSKRCAITGKGPMVGNNVSH.

It belongs to the bacterial ribosomal protein bL28 family.

The protein is Large ribosomal subunit protein bL28 of Campylobacter concisus (strain 13826).